Consider the following 311-residue polypeptide: Exosome complex component Rrp4 (311 aa).

Residues 63-131 (GDVVIGEITD…EVKKVKLGLK (69 aa)) enclose the S1 motif domain. Residues 139–197 (RDGILVYITPTKVPRLIGKRGSMINMVKEKTHCDIVVGQNGVVWIKGEPDMERIAEKVV) enclose the KH domain. The tract at residues 222–311 (GVEPEIQVEE…EVKDENNSER (90 aa)) is disordered. Positions 241–300 (PESEDFEEASDYSEDVEVSPESEDIEEVSDESEDLEVESEDVEEGTDTPAAEEDDGEAGD) are enriched in acidic residues. Basic and acidic residues predominate over residues 301 to 311 (AEVKDENNSER).

This sequence belongs to the RRP4 family. Component of the archaeal exosome complex. Forms a trimer of Rrp4 and/or Csl4 subunits. The trimer associates with a hexameric ring-like arrangement composed of 3 Rrp41-Rrp42 heterodimers.

It localises to the cytoplasm. In terms of biological role, non-catalytic component of the exosome, which is a complex involved in RNA degradation. Increases the RNA binding and the efficiency of RNA degradation. Confers strong poly(A) specificity to the exosome. This is Exosome complex component Rrp4 from Methanothermobacter thermautotrophicus (strain ATCC 29096 / DSM 1053 / JCM 10044 / NBRC 100330 / Delta H) (Methanobacterium thermoautotrophicum).